The chain runs to 429 residues: 3-phosphoshikimate 1-carboxyvinyltransferase (429 aa).

Residues lysine 11, serine 12, and arginine 16 each coordinate 3-phosphoshikimate. Lysine 11 lines the phosphoenolpyruvate pocket. Glycine 82 and arginine 110 together coordinate phosphoenolpyruvate. Residues serine 155, glutamine 157, aspartate 302, and lysine 329 each contribute to the 3-phosphoshikimate site. Glutamine 157 contributes to the phosphoenolpyruvate binding site. Aspartate 302 functions as the Proton acceptor in the catalytic mechanism. Arginine 333 and arginine 385 together coordinate phosphoenolpyruvate.

The protein belongs to the EPSP synthase family. Monomer.

Its subcellular location is the cytoplasm. The enzyme catalyses 3-phosphoshikimate + phosphoenolpyruvate = 5-O-(1-carboxyvinyl)-3-phosphoshikimate + phosphate. It participates in metabolic intermediate biosynthesis; chorismate biosynthesis; chorismate from D-erythrose 4-phosphate and phosphoenolpyruvate: step 6/7. Catalyzes the transfer of the enolpyruvyl moiety of phosphoenolpyruvate (PEP) to the 5-hydroxyl of shikimate-3-phosphate (S3P) to produce enolpyruvyl shikimate-3-phosphate and inorganic phosphate. In Helicobacter acinonychis (strain Sheeba), this protein is 3-phosphoshikimate 1-carboxyvinyltransferase.